The primary structure comprises 274 residues: Large ribosomal subunit protein uL2 (274 aa).

Disordered stretches follow at residues 28–53 (KPYA…TVRH) and 223–274 (VAMN…RRTK). A compositionally biased stretch (low complexity) spans 39 to 48 (KSGGRNNNGR). Residues 254 to 274 (KGAKTRKNKRTDKFIVRRRTK) are compositionally biased toward basic residues.

It belongs to the universal ribosomal protein uL2 family. Part of the 50S ribosomal subunit. Forms a bridge to the 30S subunit in the 70S ribosome.

In terms of biological role, one of the primary rRNA binding proteins. Required for association of the 30S and 50S subunits to form the 70S ribosome, for tRNA binding and peptide bond formation. It has been suggested to have peptidyltransferase activity; this is somewhat controversial. Makes several contacts with the 16S rRNA in the 70S ribosome. This is Large ribosomal subunit protein uL2 from Pseudoalteromonas translucida (strain TAC 125).